A 342-amino-acid chain; its full sequence is Protein-ribulosamine 3-kinase, chloroplastic (342 aa).

The transit peptide at 1–46 (MANVALLSAASPSTSSAAPRLRHVARRRPSRRSACPRSAASRLSIM) directs the protein to the chloroplast. Residue 141-143 (EFI) participates in ATP binding. The active-site Proton acceptor is the aspartate 246.

Belongs to the fructosamine kinase family.

It localises to the plastid. It is found in the chloroplast. It carries out the reaction N(6)-D-ribulosyl-L-lysyl-[protein] + ATP = N(6)-(3-O-phospho-D-ribulosyl)-L-lysyl-[protein] + ADP + H(+). It catalyses the reaction N(6)-(D-erythrulosyl)-L-lysyl-[protein] + ATP = N(6)-(3-O-phospho-D-erythrulosyl)-L-lysyl-[protein] + ADP + H(+). In terms of biological role, initiates a process leading to the deglycation of proteins. Phosphorylates low-molecular-mass and protein-bound erythrulosamines and ribulosamines, but not fructosamines or psicosamines, on the third carbon of the sugar moiety. Protein-bound erythrulosamine 3-phosphates and ribulosamine 3-phosphates are unstable and decompose under physiological conditions. The sequence is that of Protein-ribulosamine 3-kinase, chloroplastic from Oryza sativa subsp. japonica (Rice).